We begin with the raw amino-acid sequence, 818 residues long: Protein Cep78 homolog (818 aa).

Disordered regions lie at residues 513–589 (LDVE…HEFA), 691–748 (RQAN…TEAT), and 768–798 (KQSE…DQNV). Acidic residues predominate over residues 514–539 (DVEEEEEEEEEEQQAEESQSESEPQN). The segment covering 561-589 (VRSEIKYVENNPKEAAKKNRESKSDHEFA) has biased composition (basic and acidic residues). Gly residues predominate over residues 782 to 792 (GDAGGGGGSGD).

The protein belongs to the CEP78 family.

Its subcellular location is the cytoplasm. The protein resides in the cytoskeleton. It localises to the microtubule organizing center. The protein localises to the centrosome. It is found in the centriole. Its subcellular location is the cilium basal body. In terms of biological role, may play a role in cilium biogenesis. The chain is Protein Cep78 homolog from Drosophila melanogaster (Fruit fly).